The sequence spans 146 residues: Ribonuclease H (146 aa).

In terms of domain architecture, RNase H type-1 spans 1 to 143 (MQKKVTIYTD…CDYLATQAIK (143 aa)). The Mg(2+) site is built by Asp-10, Glu-48, Asp-70, and Asp-135.

The protein belongs to the RNase H family. As to quaternary structure, monomer. The cofactor is Mg(2+).

Its subcellular location is the cytoplasm. The enzyme catalyses Endonucleolytic cleavage to 5'-phosphomonoester.. Its function is as follows. Endonuclease that specifically degrades the RNA of RNA-DNA hybrids. The sequence is that of Ribonuclease H from Chlorobium phaeobacteroides (strain BS1).